A 211-amino-acid polypeptide reads, in one-letter code: Large ribosomal subunit protein uL3 (211 aa).

A disordered region spans residues 122–147 (AIKRHGQSRGPMAHGSRYHRRPGSMG).

This sequence belongs to the universal ribosomal protein uL3 family. Part of the 50S ribosomal subunit. Forms a cluster with proteins L14 and L19.

In terms of biological role, one of the primary rRNA binding proteins, it binds directly near the 3'-end of the 23S rRNA, where it nucleates assembly of the 50S subunit. This chain is Large ribosomal subunit protein uL3, found in Geobacillus sp. (strain WCH70).